Consider the following 391-residue polypeptide: Phosphoglycerate kinase (391 aa).

Substrate contacts are provided by residues 21 to 23 (DLN), Arg36, 59 to 62 (HLGR), Arg114, and Arg147. ATP is bound by residues Lys198, Glu315, and 344 to 347 (GGDT).

It belongs to the phosphoglycerate kinase family. As to quaternary structure, monomer.

It localises to the cytoplasm. The catalysed reaction is (2R)-3-phosphoglycerate + ATP = (2R)-3-phospho-glyceroyl phosphate + ADP. It participates in carbohydrate degradation; glycolysis; pyruvate from D-glyceraldehyde 3-phosphate: step 2/5. This chain is Phosphoglycerate kinase, found in Haemophilus ducreyi (strain 35000HP / ATCC 700724).